A 442-amino-acid chain; its full sequence is MEVNVVENGLFDRDITITVAAEKVDALLSQEMTKTAAQVRLPGFRAGKVPTKMIEQRFGASIRAEVAEQLFRDSYPTALMEKGLRPVGQPELDLVELEKGKPFTYTAKIQIFPVIEPKDYTGMSLTKPVVTIQDSDVETVITRVREANAEYRTQEGVAAASGDRMTFDFEGFVDGEAFEGGKAEDYVLELGSNRFIPGFEDQLIGAKGGDALEVKVTFPEDYHGTQLAGKEAIFKCVVKAIESRELPEVDEELAKKAGVQEGGVEAMKQEIHERLVKEADKVAKQEMKQQVFKLLLENNPNELPSQMVDHEIEQMVATAKEEYSRQGVDPEQLGFTDETWRNQYAEKAKERIILGLLMGSIVSKENLEIDDQAVEAHIDALVQQFAAGDYAEQLKAQLKKDKARLEEFRGAALEEKTVAWLIEQGTVTEEEKSFEELVAQRG.

The region spanning 162 to 247 is the PPIase FKBP-type domain; the sequence is GDRMTFDFEG…VKAIESRELP (86 aa).

The protein belongs to the FKBP-type PPIase family. Tig subfamily.

It localises to the cytoplasm. It carries out the reaction [protein]-peptidylproline (omega=180) = [protein]-peptidylproline (omega=0). Involved in protein export. Acts as a chaperone by maintaining the newly synthesized protein in an open conformation. Functions as a peptidyl-prolyl cis-trans isomerase. This is Trigger factor from Magnetococcus marinus (strain ATCC BAA-1437 / JCM 17883 / MC-1).